The sequence spans 322 residues: Carnosine N-methyltransferase 2 (322 aa).

Residue Glu-58 participates in substrate binding. The S-adenosyl-L-methionine site is built by Gly-90, Glu-119, Ser-150, and Ile-172. A substrate-binding site is contributed by Asn-313.

The protein belongs to the class I-like SAM-binding methyltransferase superfamily. HNMT family. In terms of assembly, monomer.

The catalysed reaction is carnosine + S-adenosyl-L-methionine = anserine + S-adenosyl-L-homocysteine + H(+). Functionally, N-methyltransferase that mediates the formation of anserine (beta-alanyl-N(Pi)-methyl-L-histidine) from carnosine. Anserine, a methylated derivative of carnosine (beta-alanyl-L-histidine), is an abundant constituent of vertebrate skeletal muscles. The chain is Carnosine N-methyltransferase 2 from Gallus gallus (Chicken).